Consider the following 202-residue polypeptide: Precorrin-2 dehydrogenase (202 aa).

Residues 20 to 21 (TI) and 41 to 42 (PT) each bind NAD(+).

This sequence belongs to the precorrin-2 dehydrogenase / sirohydrochlorin ferrochelatase family. In terms of assembly, homodimer.

The catalysed reaction is precorrin-2 + NAD(+) = sirohydrochlorin + NADH + 2 H(+). It participates in cofactor biosynthesis; adenosylcobalamin biosynthesis; sirohydrochlorin from precorrin-2: step 1/1. The protein operates within porphyrin-containing compound metabolism; siroheme biosynthesis; sirohydrochlorin from precorrin-2: step 1/1. In terms of biological role, catalyzes the dehydrogenation of precorrin-2 to form sirohydrochlorin which is used as a precursor in both siroheme biosynthesis and in the anaerobic branch of adenosylcobalamin biosynthesis. It is unable to oxidize precorrin-3. The polypeptide is Precorrin-2 dehydrogenase (sirC) (Priestia megaterium (Bacillus megaterium)).